The primary structure comprises 281 residues: Pantothenate synthetase (281 aa).

An ATP-binding site is contributed by 30–37 (MGNLHQGH). The active-site Proton donor is the H37. Q61 lines the (R)-pantoate pocket. Q61 is a beta-alanine binding site. ATP is bound at residue 149–152 (GNKD). Q155 lines the (R)-pantoate pocket. ATP-binding positions include I178 and 186–189 (MSSR).

It belongs to the pantothenate synthetase family. As to quaternary structure, homodimer.

It localises to the cytoplasm. It catalyses the reaction (R)-pantoate + beta-alanine + ATP = (R)-pantothenate + AMP + diphosphate + H(+). The protein operates within cofactor biosynthesis; (R)-pantothenate biosynthesis; (R)-pantothenate from (R)-pantoate and beta-alanine: step 1/1. Functionally, catalyzes the condensation of pantoate with beta-alanine in an ATP-dependent reaction via a pantoyl-adenylate intermediate. This chain is Pantothenate synthetase, found in Shewanella sp. (strain MR-7).